Consider the following 516-residue polypeptide: 2-isopropylmalate synthase (516 aa).

In terms of domain architecture, Pyruvate carboxyltransferase spans 5 to 267; the sequence is VIIFDTTLRD…TTGIKHDEIS (263 aa). 4 residues coordinate Mn(2+): Asp14, His202, His204, and Asn238. The regulatory domain stretch occupies residues 392 to 516; that stretch reads KLNYLSVQSG…IKQKKSVATV (125 aa).

It belongs to the alpha-IPM synthase/homocitrate synthase family. LeuA type 1 subfamily. Homodimer. Mn(2+) is required as a cofactor.

Its subcellular location is the cytoplasm. The enzyme catalyses 3-methyl-2-oxobutanoate + acetyl-CoA + H2O = (2S)-2-isopropylmalate + CoA + H(+). It participates in amino-acid biosynthesis; L-leucine biosynthesis; L-leucine from 3-methyl-2-oxobutanoate: step 1/4. Functionally, catalyzes the condensation of the acetyl group of acetyl-CoA with 3-methyl-2-oxobutanoate (2-ketoisovalerate) to form 3-carboxy-3-hydroxy-4-methylpentanoate (2-isopropylmalate). In Vibrio cholerae serotype O1 (strain ATCC 39315 / El Tor Inaba N16961), this protein is 2-isopropylmalate synthase.